The chain runs to 136 residues: Protein NrdI (136 aa).

This sequence belongs to the NrdI family.

In terms of biological role, probably involved in ribonucleotide reductase function. In Salmonella typhi, this protein is Protein NrdI.